Here is a 178-residue protein sequence, read N- to C-terminus: MHLKASLLDENAIRRALTRLSHEIIEKNKGVEDIVLVGIKRRGYPLAERLSEFIEKFEGVKIPVASVDITLYRDDLTNVSDTPNLNDPKIDVDIRGKKVIIVDDVLYTCRTARAAIDAIMDQGRPEFIQLAVLVDRGHKELPIRADYVGKNIPTSKDEIIKVQIKEIDGTDSVEIYEN.

Residues 99–111 (VIIVDDVLYTCRT) carry the PRPP-binding motif.

The protein belongs to the purine/pyrimidine phosphoribosyltransferase family. PyrR subfamily. Homodimer and homohexamer; in equilibrium.

The catalysed reaction is UMP + diphosphate = 5-phospho-alpha-D-ribose 1-diphosphate + uracil. Functionally, regulates transcriptional attenuation of the pyrimidine nucleotide (pyr) operon by binding in a uridine-dependent manner to specific sites on pyr mRNA. This disrupts an antiterminator hairpin in the RNA and favors formation of a downstream transcription terminator, leading to a reduced expression of downstream genes. Its function is as follows. Also displays a weak uracil phosphoribosyltransferase activity which is not physiologically significant. This chain is Bifunctional protein PyrR, found in Clostridium perfringens (strain ATCC 13124 / DSM 756 / JCM 1290 / NCIMB 6125 / NCTC 8237 / Type A).